The following is a 354-amino-acid chain: D-alanine--D-alanine ligase (354 aa).

In terms of domain architecture, ATP-grasp spans 140–344; it reads KRLLRDSGLS…ISTLLTRLIM (205 aa). 170–225 lines the ATP pocket; that stretch reads ADMFGLPFFVKPVNQGSSIGVAKVNDDYSFHSALDIAFFYSHKIIIESCIAGRELE. D298, E311, and N313 together coordinate Mg(2+).

This sequence belongs to the D-alanine--D-alanine ligase family. Mg(2+) serves as cofactor. Mn(2+) is required as a cofactor.

Its subcellular location is the cytoplasm. It catalyses the reaction 2 D-alanine + ATP = D-alanyl-D-alanine + ADP + phosphate + H(+). Its pathway is cell wall biogenesis; peptidoglycan biosynthesis. Its function is as follows. Cell wall formation. This Blochmanniella floridana protein is D-alanine--D-alanine ligase.